Consider the following 86-residue polypeptide: Omega-theraphotoxin-Hhn1c (86 aa).

The signal sequence occupies residues 1 to 21 (MKSIVFVALFGLALLAVVCSA). The propeptide occupies 22 to 50 (SEDAHKELLKEVVRAMVVDKTDAVQAEER). Intrachain disulfides connect Cys52/Cys66, Cys59/Cys71, and Cys65/Cys78.

The protein belongs to the neurotoxin 10 (Hwtx-1) family. 17 (Hntx-9) subfamily. As to expression, expressed by the venom gland.

It localises to the secreted. In terms of biological role, ion channel inhibitor. This Cyriopagopus hainanus (Chinese bird spider) protein is Omega-theraphotoxin-Hhn1c.